Consider the following 486-residue polypeptide: UDP-N-acetylmuramate--L-alanine ligase (486 aa).

126-132 (GTHGKTS) is an ATP binding site.

Belongs to the MurCDEF family.

It is found in the cytoplasm. The catalysed reaction is UDP-N-acetyl-alpha-D-muramate + L-alanine + ATP = UDP-N-acetyl-alpha-D-muramoyl-L-alanine + ADP + phosphate + H(+). It participates in cell wall biogenesis; peptidoglycan biosynthesis. Cell wall formation. The protein is UDP-N-acetylmuramate--L-alanine ligase of Buchnera aphidicola subsp. Baizongia pistaciae (strain Bp).